A 196-amino-acid chain; its full sequence is DNA replication complex GINS protein PSF1 (196 aa).

It belongs to the GINS1/PSF1 family. Component of the GINS complex which is a heterotetramer of GINS1, GINS2, GINS3 and GINS4. Forms a stable subcomplex with GINS4. GINS complex interacts with DNA primase in vitro. Component of the CMG helicase complex, a hexameric ring of related MCM2-7 subunits stabilized by CDC45 and the tetrameric GINS complex.

Its subcellular location is the nucleus. It is found in the chromosome. Functionally, required for correct functioning of the GINS complex, a complex that plays an essential role in the initiation of DNA replication, and progression of DNA replication forks. GINS complex is a core component of CDC45-MCM-GINS (CMG) helicase, the molecular machine that unwinds template DNA during replication, and around which the replisome is built. This is DNA replication complex GINS protein PSF1 (GINS1) from Bos taurus (Bovine).